The sequence spans 249 residues: MAPRPKAPPQPAEPDPALPRPRGRPPKAGAVTAGWVGLDFTRERALYADGRAPVAGADEVGRGPLAGPVVAAAVVLDPARVPQGLDDSKKLTRAKRESLYLEICATAEVAIALAPPERIDRDNIRQATLWALANAVRGLPCRPAFLLVDGNDPPRVDCEVEAIVGGDGLVASIAAASIVAKVVRDRLMAGVGAAFPAYGFERHMGYGTREHGAALKAHGPCLHHRRSFAPVREQQLGLFPAPGELEEAD.

The span at 1-19 (MAPRPKAPPQPAEPDPALP) shows a compositional bias: pro residues. A disordered region spans residues 1–31 (MAPRPKAPPQPAEPDPALPRPRGRPPKAGAV). The RNase H type-2 domain maps to 52 to 240 (APVAGADEVG…VREQQLGLFP (189 aa)). Positions 58, 59, and 149 each coordinate a divalent metal cation.

Belongs to the RNase HII family. It depends on Mn(2+) as a cofactor. The cofactor is Mg(2+).

The protein localises to the cytoplasm. It catalyses the reaction Endonucleolytic cleavage to 5'-phosphomonoester.. Functionally, endonuclease that specifically degrades the RNA of RNA-DNA hybrids. This is Ribonuclease HII from Xanthobacter autotrophicus (strain ATCC BAA-1158 / Py2).